The chain runs to 488 residues: Pre-glycoprotein polyprotein GP complex (488 aa).

The N-myristoyl glycine; by host moiety is linked to residue Gly-2. The Extracellular portion of the chain corresponds to 2–17; it reads GQLFSFFEEVPNIIHE. The helical transmembrane segment at 18 to 32 threads the bilayer; that stretch reads AINIALIAVSLIAAL. A topological domain (cytoplasmic) is located at residue Lys-33. A helical transmembrane segment spans residues 34–53; that stretch reads GMINLWKSGLFQLIFFLTLA. Extracellular-side segments run 54–58 and 59–427; these read GRSCS and FRIG…TLVD. Residue Cys-57 coordinates Zn(2+). 7 N-linked (GlcNAc...) asparagine; by host glycosylation sites follow: Asn-69, Asn-88, Asn-99, Asn-125, Asn-171, Asn-178, and Asn-222. 4 cysteine pairs are disulfide-bonded: Cys-85–Cys-229, Cys-274–Cys-287, Cys-296–Cys-305, and Cys-359–Cys-380. N-linked (GlcNAc...) asparagine; by host glycosylation is found at Asn-360, Asn-368, Asn-385, and Asn-390. A helical membrane pass occupies residues 428-448; it reads ICFWSTLFFTTTLFLHLVGFP. The Cytoplasmic segment spans residues 449–488; it reads THRHIRGEPCPLPHRLNSRGGCRCGKYPELKKPITWHKNH. 7 residues coordinate Zn(2+): His-450, His-452, Cys-458, His-462, Cys-470, Cys-472, and His-488.

Belongs to the arenaviridae GPC protein family. Homotetramer; disulfide-linked. As to quaternary structure, homotetramer. GP2 homotetramers bind through ionic interactions with GP1 homotetramers to form the GP complex together with the stable signal peptide. The GP-C polyprotein interacts with the host protease MBTPS1/SKI-1 resulting in the polyprotein processing. Post-translationally, specific enzymatic cleavages in vivo yield mature proteins. GP-C polyprotein is cleaved in the endoplasmic reticulum by the host protease MBTPS1. Only cleaved glycoprotein is incorporated into virions. The SSP remains stably associated with the GP complex following cleavage by signal peptidase and plays crucial roles in the trafficking of GP through the secretory pathway. In terms of processing, myristoylation is necessary for GP2-mediated fusion activity.

It localises to the virion membrane. Its subcellular location is the host endoplasmic reticulum membrane. It is found in the host Golgi apparatus membrane. The protein resides in the host cell membrane. Interacts with the host receptor. Mediates virus attachment to host TFRC. This attachment induces virion internalization predominantly through clathrin-mediated endocytosis. Functionally, class I viral fusion protein that directs fusion of viral and host endosomal membranes, leading to delivery of the nucleocapsid into the cytoplasm. Membrane fusion is mediated by irreversible conformational changes induced upon acidification in the endosome. Its function is as follows. Stable signal peptide (SSP): cleaved and functions as a signal peptide. In addition, it is also retained as the third component of the GP complex. The SSP is required for efficient glycoprotein expression, post-translational maturation cleavage of GP1 and GP2, glycoprotein transport to the cell surface plasma membrane, formation of infectious virus particles, and acid pH-dependent glycoprotein-mediated cell fusion. In Homo sapiens (Human), this protein is Pre-glycoprotein polyprotein GP complex.